The primary structure comprises 389 residues: Succinate--CoA ligase [ADP-forming] subunit beta (389 aa).

The ATP-grasp domain occupies Arg-9 to Lys-236. ATP-binding positions include Lys-45, Gly-52 to Gly-54, Ala-94, and Glu-99. Mg(2+)-binding residues include Asn-191 and Asp-205. Residues Asn-256 and Gly-318 to Thr-320 each bind substrate.

This sequence belongs to the succinate/malate CoA ligase beta subunit family. Heterotetramer of two alpha and two beta subunits. Requires Mg(2+) as cofactor.

The catalysed reaction is succinate + ATP + CoA = succinyl-CoA + ADP + phosphate. It carries out the reaction GTP + succinate + CoA = succinyl-CoA + GDP + phosphate. The protein operates within carbohydrate metabolism; tricarboxylic acid cycle; succinate from succinyl-CoA (ligase route): step 1/1. Its function is as follows. Succinyl-CoA synthetase functions in the citric acid cycle (TCA), coupling the hydrolysis of succinyl-CoA to the synthesis of either ATP or GTP and thus represents the only step of substrate-level phosphorylation in the TCA. The beta subunit provides nucleotide specificity of the enzyme and binds the substrate succinate, while the binding sites for coenzyme A and phosphate are found in the alpha subunit. This Paenarthrobacter aurescens (strain TC1) protein is Succinate--CoA ligase [ADP-forming] subunit beta.